The primary structure comprises 356 residues: Phenylalanine--tRNA ligase alpha subunit (356 aa).

Glutamate 260 provides a ligand contact to Mg(2+).

It belongs to the class-II aminoacyl-tRNA synthetase family. Phe-tRNA synthetase alpha subunit type 1 subfamily. In terms of assembly, tetramer of two alpha and two beta subunits. The cofactor is Mg(2+).

Its subcellular location is the cytoplasm. The enzyme catalyses tRNA(Phe) + L-phenylalanine + ATP = L-phenylalanyl-tRNA(Phe) + AMP + diphosphate + H(+). In Gluconacetobacter diazotrophicus (strain ATCC 49037 / DSM 5601 / CCUG 37298 / CIP 103539 / LMG 7603 / PAl5), this protein is Phenylalanine--tRNA ligase alpha subunit.